A 158-amino-acid chain; its full sequence is 2-C-methyl-D-erythritol 2,4-cyclodiphosphate synthase (158 aa).

2 residues coordinate a divalent metal cation: Asp-8 and His-10. Residues 8 to 10 and 34 to 35 each bind 4-CDP-2-C-methyl-D-erythritol 2-phosphate; these read DVH and HS. His-42 serves as a coordination point for a divalent metal cation. 4-CDP-2-C-methyl-D-erythritol 2-phosphate-binding positions include 56–58, 61–65, 100–106, 132–135, Phe-139, and Lys-142; these read DIG, FPDTD, AQKPKML, and TTEE.

The protein belongs to the IspF family. As to quaternary structure, homotrimer. It depends on a divalent metal cation as a cofactor.

The catalysed reaction is 4-CDP-2-C-methyl-D-erythritol 2-phosphate = 2-C-methyl-D-erythritol 2,4-cyclic diphosphate + CMP. It participates in isoprenoid biosynthesis; isopentenyl diphosphate biosynthesis via DXP pathway; isopentenyl diphosphate from 1-deoxy-D-xylulose 5-phosphate: step 4/6. Its function is as follows. Involved in the biosynthesis of isopentenyl diphosphate (IPP) and dimethylallyl diphosphate (DMAPP), two major building blocks of isoprenoid compounds. Catalyzes the conversion of 4-diphosphocytidyl-2-C-methyl-D-erythritol 2-phosphate (CDP-ME2P) to 2-C-methyl-D-erythritol 2,4-cyclodiphosphate (ME-CPP) with a corresponding release of cytidine 5-monophosphate (CMP). In Clostridium tetani (strain Massachusetts / E88), this protein is 2-C-methyl-D-erythritol 2,4-cyclodiphosphate synthase.